A 503-amino-acid chain; its full sequence is Probable protein kinase UbiB (503 aa).

The helical transmembrane segment at 13-35 (TFYRYRLAGLCASLMGSGWICAL) threads the bilayer. Residues 120–491 (EFETEPIASA…QQRQSLWLAV (372 aa)) enclose the Protein kinase domain. Residues 126–134 (IASASIAQV) and Lys148 contribute to the ATP site. The active-site Proton acceptor is the Asp283. The chain crosses the membrane as a helical span at residues 485–502 (QSLWLAVIAVVLLLILLL).

It belongs to the ABC1 family. UbiB subfamily.

It is found in the cell inner membrane. Its pathway is cofactor biosynthesis; ubiquinone biosynthesis [regulation]. Its function is as follows. Is probably a protein kinase regulator of UbiI activity which is involved in aerobic coenzyme Q (ubiquinone) biosynthesis. The protein is Probable protein kinase UbiB of Neisseria meningitidis serogroup A / serotype 4A (strain DSM 15465 / Z2491).